The sequence spans 130 residues: Glycine cleavage system H protein (130 aa).

Residues 24 to 106 enclose the Lipoyl-binding domain; that stretch reads TVTIGITDHA…YDDGWFFKVK (83 aa). The residue at position 65 (lysine 65) is an N6-lipoyllysine.

It belongs to the GcvH family. As to quaternary structure, the glycine cleavage system is composed of four proteins: P, T, L and H. It depends on (R)-lipoate as a cofactor.

In terms of biological role, the glycine cleavage system catalyzes the degradation of glycine. The H protein shuttles the methylamine group of glycine from the P protein to the T protein. The protein is Glycine cleavage system H protein of Saccharophagus degradans (strain 2-40 / ATCC 43961 / DSM 17024).